The following is a 445-amino-acid chain: Argininosuccinate synthase (445 aa).

ATP is bound by residues 17–25 (AFSGGLDTS) and A43. Y99 is an L-citrulline binding site. Residues G129 and T131 each contribute to the ATP site. Residues T131, N135, and D136 each coordinate L-aspartate. Residue N135 coordinates L-citrulline. An ATP-binding site is contributed by D136. L-citrulline contacts are provided by R139 and S192. Residue D194 coordinates ATP. Positions 201, 203, and 280 each coordinate L-citrulline.

This sequence belongs to the argininosuccinate synthase family. Type 2 subfamily. In terms of assembly, homotetramer.

It localises to the cytoplasm. The enzyme catalyses L-citrulline + L-aspartate + ATP = 2-(N(omega)-L-arginino)succinate + AMP + diphosphate + H(+). The protein operates within amino-acid biosynthesis; L-arginine biosynthesis; L-arginine from L-ornithine and carbamoyl phosphate: step 2/3. This chain is Argininosuccinate synthase, found in Burkholderia ambifaria (strain MC40-6).